Consider the following 501-residue polypeptide: Probable histidine--tRNA ligase, mitochondrial (501 aa).

Residues 32 to 54 form a disordered region; it reads TNSNNNNNNNNNNNNNNNNNKNI. Over residues 33–54 the composition is skewed to low complexity; the sequence is NSNNNNNNNNNNNNNNNNNKNI.

It belongs to the class-II aminoacyl-tRNA synthetase family.

The protein localises to the mitochondrion matrix. It carries out the reaction tRNA(His) + L-histidine + ATP = L-histidyl-tRNA(His) + AMP + diphosphate + H(+). The sequence is that of Probable histidine--tRNA ligase, mitochondrial (mhisS) from Dictyostelium discoideum (Social amoeba).